Reading from the N-terminus, the 182-residue chain is Ribosome maturation factor RimM (182 aa).

A PRC barrel domain is found at 103-182 (EDDYYWKDLM…RVEVDWDPGF (80 aa)).

Belongs to the RimM family. Binds ribosomal protein uS19.

It is found in the cytoplasm. An accessory protein needed during the final step in the assembly of 30S ribosomal subunit, possibly for assembly of the head region. Essential for efficient processing of 16S rRNA. May be needed both before and after RbfA during the maturation of 16S rRNA. It has affinity for free ribosomal 30S subunits but not for 70S ribosomes. The chain is Ribosome maturation factor RimM from Yersinia pestis bv. Antiqua (strain Antiqua).